A 593-amino-acid chain; its full sequence is F-box/LRR-repeat protein 17 (593 aa).

An F-box domain is found at 120 to 177 (DLDLQLDTDIVQPGRFHAVGLWEVLKRLPPSSLLMAARVCKGWRETSRKMWKAAEELR). LRR repeat units follow at residues 178–206 (IRVP…SLKI), 207–232 (ESDF…EITT), 237–262 (VNRI…KMEG), 276–304 (LSTL…SLEF), 335–361 (SLKL…SLVL), 362–387 (GINI…DLSG), 414–439 (CPNI…DCGM), 477–502 (LSLW…NLNL), and 503–525 (CSNL…YASG).

Part of a SCF (ASK-cullin-F-box) protein ligase complex. Interacts with SKP1A/ASK1, KRP4, KRP6 and KRP7. As to expression, expressed in developing pollen.

The protein resides in the nucleus. It functions in the pathway protein modification; protein ubiquitination. Essential protein for male fertility. Component of the SCF(ASK-cullin-F-box) E3 ubiquitin ligase complex SCF(FBL17), which mediates the ubiquitination and subsequent proteasomal degradation of target proteins. Enables the switch in cell cycle control leading to male germ cell lineage formation from microspores after meiosis. Targets CDKA-1 inhibitors the degradation specifically in male germ cells (e.g. KRP6 and KRP7) and thus enables CDKA-1 activation and germ cell S-phase progression. Promotes twin sperm cell production and double fertilization. The polypeptide is F-box/LRR-repeat protein 17 (FBL17) (Arabidopsis thaliana (Mouse-ear cress)).